The following is a 271-amino-acid chain: Putative glucose-6-phosphate 1-epimerase (271 aa).

2 residues coordinate substrate: R71 and R93. Residue H151 is part of the active site. D193 provides a ligand contact to substrate. Residue E249 is part of the active site.

The protein belongs to the glucose-6-phosphate 1-epimerase family.

It carries out the reaction alpha-D-glucose 6-phosphate = beta-D-glucose 6-phosphate. The chain is Putative glucose-6-phosphate 1-epimerase from Haemophilus influenzae (strain ATCC 51907 / DSM 11121 / KW20 / Rd).